We begin with the raw amino-acid sequence, 965 residues long: Receptor-like protein 15 (965 aa).

The first 23 residues, 1–23, serve as a signal peptide directing secretion; that stretch reads MEGKVFLGHNLIWVMLLMGQLHG. Residues 24–916 are Extracellular-facing; the sequence is YKSCIDEEKI…GVEADESIID (893 aa). Residues Asn-57, Asn-95, Asn-109, and Asn-145 are each glycosylated (N-linked (GlcNAc...) asparagine). 17 LRR repeats span residues 80–102, 103–127, 131–154, 156–179, 180–204, 206–230, 243–267, 268–290, 292–315, 316–341, 342–365, 366–389, 391–415, 417–435, 437–461, 462–485, and 487–512; these read EISF…LHPF, EDVR…GYKS, LRKL…FLSA, TSLT…ELRD, LTNL…ELSS, RKLK…KFCT, LNNM…LTSL, TGLR…SLGS, QSLE…SLAN, LSNL…SWKP, KFQL…LLHQ, KDLR…LLAN, TKLK…AHNL, FLDV…NIGW, FPHL…LGNM, NGIQ…FVNG, and YSMA…NFTN. The N-linked (GlcNAc...) asparagine glycan is linked to Asn-194. N-linked (GlcNAc...) asparagine glycosylation is present at Asn-315. N-linked (GlcNAc...) asparagine glycans are attached at residues Asn-377 and Asn-389. The N-linked (GlcNAc...) asparagine glycan is linked to Asn-444. Asn-509 carries N-linked (GlcNAc...) asparagine glycosylation. One copy of the LRR 18; degenerate repeat lies at 514–533; it reads LGLFMDNNLFTGKIGQGLRS. LRR repeat units follow at residues 534–557, 558–582, 584–606, 608–627, 628–652, 654–674, 675–698, 778–801, 802–825, 827–850, and 851–875; these read LINL…WIGE, LPSL…LFNK, SLQL…HDSR, GVVL…DTLL, ANVE…NIQN, SILL…LCGL, SNIQ…LSNT, LKLL…EFGG, LLEL…SISS, EKME…LTEL, and TSLS…QFNT. Residues Asn-546 and Asn-581 are each glycosylated (N-linked (GlcNAc...) asparagine). N-linked (GlcNAc...) asparagine glycans are attached at residues Asn-652, Asn-662, Asn-688, and Asn-697. N-linked (GlcNAc...) asparagine glycans are attached at residues Asn-809 and Asn-814. 3 N-linked (GlcNAc...) asparagine glycosylation sites follow: Asn-862, Asn-893, and Asn-898. A helical membrane pass occupies residues 917-937; it reads MVSFYLSFAAAYVTILIGILA. Residues 938–965 lie on the Cytoplasmic side of the membrane; that stretch reads SLSFDSPWSRFWFYKVDAFIKKVRNLLL.

It belongs to the RLP family.

The protein resides in the cell membrane. In Arabidopsis thaliana (Mouse-ear cress), this protein is Receptor-like protein 15.